The primary structure comprises 153 residues: Ribonuclease H (153 aa).

An RNase H type-1 domain is found at 1–142; it reads MRKKIEIFTD…CDELARIAAE (142 aa). The Mg(2+) site is built by Asp10, Glu48, Asp70, and Asp134.

It belongs to the RNase H family. As to quaternary structure, monomer. Mg(2+) serves as cofactor.

It is found in the cytoplasm. It carries out the reaction Endonucleolytic cleavage to 5'-phosphomonoester.. Functionally, endonuclease that specifically degrades the RNA of RNA-DNA hybrids. The chain is Ribonuclease H from Baumannia cicadellinicola subsp. Homalodisca coagulata.